The following is a 292-amino-acid chain: Probable endonuclease LCL3 (292 aa).

Residues 41–58 (YFSVAAFAAGSLSLAASY) form a helical membrane-spanning segment. In terms of domain architecture, TNase-like spans 83–247 (RWIKGRVTSV…KDARRGIWAK (165 aa)). Residue Arg132 is part of the active site. Asp137 provides a ligand contact to Ca(2+). Active-site residues include Glu140 and Arg180. The segment at 256 to 282 (EYKRRYAQAADGGEPPSKARAEKEQKR) is disordered. Over residues 272–282 (SKARAEKEQKR) the composition is skewed to basic and acidic residues.

The protein belongs to the LCL3 family.

The protein resides in the mitochondrion. It localises to the membrane. This chain is Probable endonuclease LCL3 (LCL3), found in Schizophyllum commune (strain H4-8 / FGSC 9210) (Split gill fungus).